The sequence spans 987 residues: Ephrin type-B receptor 4 (987 aa).

An N-terminal signal peptide occupies residues 1-15 (MELRVLLCWASLAAA). Residues 16-539 (LEETLLNTKL…ESEGWREQLA (524 aa)) lie on the Extracellular side of the membrane. The region spanning 17-202 (EETLLNTKLE…FYKKCAQLTV (186 aa)) is the Eph LBD domain. Intrachain disulfides connect Cys61-Cys184 and Cys97-Cys107. 3 N-linked (GlcNAc...) asparagine glycosylation sites follow: Asn203, Asn335, and Asn426. 2 consecutive Fibronectin type-III domains span residues 323–432 (PPSA…TDRE) and 436–529 (AVSD…TQLD). A helical membrane pass occupies residues 540 to 560 (LIAGTAVVGVVLVLVVIVVAV). Residues 561–987 (LCLRKQSNGR…GGTGGPAPQY (427 aa)) lie on the Cytoplasmic side of the membrane. A Protein kinase domain is found at 615-899 (VKIEEVIGAG…ENGGASHPLL (285 aa)). ATP-binding positions include 621–629 (IGAGEFGEV) and Lys647. The Proton acceptor role is filled by Asp740. Ser769, Ser770, Ser911, and Ser943 each carry phosphoserine. Residues 907 to 971 (SAFGSVGEWL…LASVQHMKSQ (65 aa)) form the SAM domain. Positions 965-987 (VQHMKSQAKPGTPGGTGGPAPQY) are disordered. Thr976 carries the post-translational modification Phosphothreonine. The span at 976–987 (TPGGTGGPAPQY) shows a compositional bias: gly residues. The PDZ-binding motif lies at 985–987 (PQY). Tyr987 is subject to Phosphotyrosine.

Belongs to the protein kinase superfamily. Tyr protein kinase family. Ephrin receptor subfamily. In terms of assembly, heterotetramer upon binding of the ligand. The heterotetramer is composed of an ephrin dimer and a receptor dimer. Oligomerization is probably required to induce biological responses. Interacts with RASA1; the interaction depends on EPHB4 tyrosine-phosphorylation. In terms of processing, phosphorylated; autophosphorylation is stimulated by EFNB2. In terms of tissue distribution, abundantly expressed in placenta but also detected in kidney, liver, lung, pancreas, skeletal muscle and heart. Expressed in primitive and myeloid, but not lymphoid, hematopoietic cells. Also observed in cell lines derived from liver, breast, colon, lung, melanocyte and cervix.

The protein resides in the cell membrane. The enzyme catalyses L-tyrosyl-[protein] + ATP = O-phospho-L-tyrosyl-[protein] + ADP + H(+). In terms of biological role, receptor tyrosine kinase which binds promiscuously transmembrane ephrin-B family ligands residing on adjacent cells, leading to contact-dependent bidirectional signaling into neighboring cells. The signaling pathway downstream of the receptor is referred to as forward signaling while the signaling pathway downstream of the ephrin ligand is referred to as reverse signaling. Together with its cognate ligand/functional ligand EFNB2 it is involved in the regulation of cell adhesion and migration, and plays a central role in heart morphogenesis, angiogenesis and blood vessel remodeling and permeability. EPHB4-mediated forward signaling controls cellular repulsion and segregation from EFNB2-expressing cells. In Homo sapiens (Human), this protein is Ephrin type-B receptor 4 (EPHB4).